A 367-amino-acid polypeptide reads, in one-letter code: Farnesyl pyrophosphate synthase (367 aa).

Positions 71, 74, and 110 each coordinate isopentenyl diphosphate. The Mg(2+) site is built by aspartate 117 and aspartate 121. A dimethylallyl diphosphate-binding site is contributed by arginine 126. Position 127 (arginine 127) interacts with isopentenyl diphosphate. Residues lysine 214, threonine 215, glutamine 254, lysine 271, and lysine 280 each coordinate dimethylallyl diphosphate.

The protein belongs to the FPP/GGPP synthase family. As to quaternary structure, homodimer. It depends on Mg(2+) as a cofactor.

Its subcellular location is the cytoplasm. It carries out the reaction isopentenyl diphosphate + dimethylallyl diphosphate = (2E)-geranyl diphosphate + diphosphate. The enzyme catalyses isopentenyl diphosphate + (2E)-geranyl diphosphate = (2E,6E)-farnesyl diphosphate + diphosphate. Its pathway is isoprenoid biosynthesis; farnesyl diphosphate biosynthesis; farnesyl diphosphate from geranyl diphosphate and isopentenyl diphosphate: step 1/1. The protein operates within isoprenoid biosynthesis; geranyl diphosphate biosynthesis; geranyl diphosphate from dimethylallyl diphosphate and isopentenyl diphosphate: step 1/1. Functionally, catalyzes the sequential condensation of isopentenyl pyrophosphate with the allylic pyrophosphates, dimethylallyl pyrophosphate, and then with the resultant geranylpyrophosphate to the ultimate product farnesyl pyrophosphate. This Gallus gallus (Chicken) protein is Farnesyl pyrophosphate synthase (FDPS).